A 369-amino-acid polypeptide reads, in one-letter code: Mitogen-activated protein kinase 5 (369 aa).

The region spanning 36 to 322 is the Protein kinase domain; that stretch reads QPPIMPIGRG…VEEALDHPYL (287 aa). ATP contacts are provided by residues 42–50 and Lys-65; that span reads IGRGAYGIV. The active-site Proton acceptor is the Asp-162. Thr-194 is subject to Phosphothreonine. A TXY motif is present at residues 194–196; the sequence is TEY. Tyr-196 carries the phosphotyrosine modification.

Belongs to the protein kinase superfamily. CMGC Ser/Thr protein kinase family. MAP kinase subfamily. In terms of assembly, interacts with MKK1. In terms of processing, dually phosphorylated on Thr-194 and Tyr-196, which activates the enzyme.

The catalysed reaction is L-seryl-[protein] + ATP = O-phospho-L-seryl-[protein] + ADP + H(+). The enzyme catalyses L-threonyl-[protein] + ATP = O-phospho-L-threonyl-[protein] + ADP + H(+). Activated by threonine and tyrosine phosphorylation. Its function is as follows. Involved in disease resistance and abiotic stress tolerance signaling pathways. This Oryza sativa subsp. indica (Rice) protein is Mitogen-activated protein kinase 5 (MPK5).